Consider the following 572-residue polypeptide: Cuticlin-6 (572 aa).

Residues 1-24 (MRPIPYDISLSITSFLSLILICSA) form the signal peptide. Residues 25-541 (NPIDNGLVDS…PLPYPLINTN (517 aa)) are Extracellular-facing. The VWFA domain occupies 47 to 216 (EVILLLDASG…QLDRALADSL (170 aa)). Asn78 is a glycosylation site (N-linked (GlcNAc...) asparagine). One can recognise a ZP domain in the interval 233–479 (ICGPDRIGVK…GGCEGITPPQ (247 aa)). The helical transmembrane segment at 542 to 562 (LWIMGIITLTNIFVFILTVWF) threads the bilayer. Over 563 to 572 (TFRKRRCKPA) the chain is Cytoplasmic.

The protein localises to the cell membrane. Plays a role in alae formation in dauer larvae probably by regulating cuticle assembly. This chain is Cuticlin-6, found in Caenorhabditis elegans.